Consider the following 357-residue polypeptide: UDP-N-acetylglucosamine--N-acetylmuramyl-(pentapeptide) pyrophosphoryl-undecaprenol N-acetylglucosamine transferase (357 aa).

UDP-N-acetyl-alpha-D-glucosamine is bound by residues 7–9 (TGG), Asn-119, Arg-159, Ser-187, Ile-241, and Gln-286.

This sequence belongs to the glycosyltransferase 28 family. MurG subfamily.

It localises to the cell inner membrane. It catalyses the reaction di-trans,octa-cis-undecaprenyl diphospho-N-acetyl-alpha-D-muramoyl-L-alanyl-D-glutamyl-meso-2,6-diaminopimeloyl-D-alanyl-D-alanine + UDP-N-acetyl-alpha-D-glucosamine = di-trans,octa-cis-undecaprenyl diphospho-[N-acetyl-alpha-D-glucosaminyl-(1-&gt;4)]-N-acetyl-alpha-D-muramoyl-L-alanyl-D-glutamyl-meso-2,6-diaminopimeloyl-D-alanyl-D-alanine + UDP + H(+). It participates in cell wall biogenesis; peptidoglycan biosynthesis. Cell wall formation. Catalyzes the transfer of a GlcNAc subunit on undecaprenyl-pyrophosphoryl-MurNAc-pentapeptide (lipid intermediate I) to form undecaprenyl-pyrophosphoryl-MurNAc-(pentapeptide)GlcNAc (lipid intermediate II). This chain is UDP-N-acetylglucosamine--N-acetylmuramyl-(pentapeptide) pyrophosphoryl-undecaprenol N-acetylglucosamine transferase, found in Nitrosomonas europaea (strain ATCC 19718 / CIP 103999 / KCTC 2705 / NBRC 14298).